Here is a 200-residue protein sequence, read N- to C-terminus: Transcriptional repressor NrdR (200 aa).

The segment at 3–34 is a zinc-finger region; that stretch reads CPRCGKQEIRVLESRSAEGGQSVRRRRECMSC. The ATP-cone domain occupies 49–139; sequence IMVIKRDGSR…VYRKFQGIKD (91 aa). Positions 158 to 200 are disordered; that stretch reads LERPLRNSPPSESESTASPDWVGGIPQLLDQNDTSSNLSEIPK. Residues 186–200 are compositionally biased toward polar residues; sequence LDQNDTSSNLSEIPK.

The protein belongs to the NrdR family. It depends on Zn(2+) as a cofactor.

Its function is as follows. Negatively regulates transcription of bacterial ribonucleotide reductase nrd genes and operons by binding to NrdR-boxes. This is Transcriptional repressor NrdR from Synechococcus sp. (strain JA-3-3Ab) (Cyanobacteria bacterium Yellowstone A-Prime).